Here is a 129-residue protein sequence, read N- to C-terminus: Putative membrane protein insertion efficiency factor (129 aa).

Belongs to the UPF0161 family.

It is found in the cell inner membrane. In terms of biological role, could be involved in insertion of integral membrane proteins into the membrane. This is Putative membrane protein insertion efficiency factor from Rhodopseudomonas palustris (strain TIE-1).